The chain runs to 224 residues: Flagellar L-ring protein (224 aa).

The signal sequence occupies residues 1–15 (MARYLVLAVALLLAA). Cys-16 carries the N-palmitoyl cysteine lipid modification. Residue Cys-16 is the site of S-diacylglycerol cysteine attachment.

It belongs to the FlgH family. As to quaternary structure, the basal body constitutes a major portion of the flagellar organelle and consists of four rings (L,P,S, and M) mounted on a central rod.

Its subcellular location is the cell outer membrane. It is found in the bacterial flagellum basal body. In terms of biological role, assembles around the rod to form the L-ring and probably protects the motor/basal body from shearing forces during rotation. The protein is Flagellar L-ring protein of Shewanella baltica (strain OS223).